The chain runs to 163 residues: ATP synthase subunit b', chloroplastic (163 aa).

Residues 26 to 46 (ATLPLMALQFILLTVILTFVF) traverse the membrane as a helical segment.

It belongs to the ATPase B chain family. F-type ATPases have 2 components, F(1) - the catalytic core - and F(0) - the membrane proton channel. F(1) has five subunits: alpha(3), beta(3), gamma(1), delta(1), epsilon(1). F(0) has four main subunits: a(1), b(1), b'(1) and c(10-14). The alpha and beta chains form an alternating ring which encloses part of the gamma chain. F(1) is attached to F(0) by a central stalk formed by the gamma and epsilon chains, while a peripheral stalk is formed by the delta, b and b' chains.

It is found in the plastid. Its subcellular location is the chloroplast thylakoid membrane. F(1)F(0) ATP synthase produces ATP from ADP in the presence of a proton or sodium gradient. F-type ATPases consist of two structural domains, F(1) containing the extramembraneous catalytic core and F(0) containing the membrane proton channel, linked together by a central stalk and a peripheral stalk. During catalysis, ATP synthesis in the catalytic domain of F(1) is coupled via a rotary mechanism of the central stalk subunits to proton translocation. Its function is as follows. Component of the F(0) channel, it forms part of the peripheral stalk, linking F(1) to F(0). The b'-subunit is a diverged and duplicated form of b found in plants and photosynthetic bacteria. The sequence is that of ATP synthase subunit b', chloroplastic from Ochrosphaera neapolitana.